Here is a 502-residue protein sequence, read N- to C-terminus: Probable ADP-dependent glucokinase (502 aa).

The first 32 residues, Met1–Ser32, serve as a signal peptide directing secretion. The 454-residue stretch at Ser44–Asn497 folds into the ADPK domain. 2 N-linked (GlcNAc...) asparagine glycosylation sites follow: Asn89 and Asn190. Residues Glu290, Glu320, and Asp481 each contribute to the Mg(2+) site. Asp481 acts as the Proton acceptor in catalysis.

It belongs to the ADP-dependent glucokinase family. In terms of assembly, monomer. It depends on Mg(2+) as a cofactor.

The protein resides in the secreted. The catalysed reaction is D-glucose + ADP = D-glucose 6-phosphate + AMP + H(+). It functions in the pathway carbohydrate degradation; glycolysis. Catalyzes the phosphorylation of D-glucose to D-glucose 6-phosphate using ADP as the phosphate donor. GDP and CDP can replace ADP, but with reduced efficiency. The polypeptide is Probable ADP-dependent glucokinase (Caenorhabditis elegans).